The chain runs to 447 residues: Putative vacuolar cation/proton exchanger 4 (447 aa).

A disordered region spans residues 1–29 (MDKSEMDKINGTNPESTDQAPSLASRPDE). The Cytoplasmic segment spans residues 1 to 65 (MDKSEMDKIN…VNWGVFGSMK (65 aa)). The span at 10–22 (NGTNPESTDQAPS) shows a compositional bias: polar residues. The helical transmembrane segment at 66 to 86 (IVFLKSKLNVLIPCGFLAIFL) threads the bilayer. Residues 87 to 93 (NYMTQRY) are Extracellular-facing. The chain crosses the membrane as a helical span at residues 94 to 114 (GWVFPLSMLGIIPLAERLGFA). The Cytoplasmic segment spans residues 115–122 (TDWQISCE). The helical transmembrane segment at 123-143 (VGRLLNSAFGNATELIISIHA) threads the bilayer. Residues 132 to 167 (GNATELIISIHALSRGKLHVVQQCLLGSILSNLLLV) form a cation selection region. Over 144 to 159 (LSRGKLHVVQQCLLGS) the chain is Extracellular. The helical transmembrane segment at 160–180 (ILSNLLLVLGSAFFSGGLACG) threads the bilayer. The Cytoplasmic portion of the chain corresponds to 181-190 (KTMQTFSKAD). Residues 191-211 (AVVNSGLLLMAVMGLLIPAAL) traverse the membrane as a helical segment. Residues 212–224 (HYTHSEAQFGKSE) are Extracellular-facing. The helical transmembrane segment at 225-245 (LALSRFSSCIMLVAYASYLYF) threads the bilayer. Topologically, residues 246-286 (QLSNNRRRNEANVYPCMPLIKRRIQDDVDGNDDEVPEISKR) are cytoplasmic. A helical transmembrane segment spans residues 287–307 (EAISWIAIFIAWISMLSYYLV). Residues 308–318 (DAIDGASKAWN) lie on the Extracellular side of the membrane. A helical membrane pass occupies residues 319–339 (IPVAFISVVLLPVVGNSAGHA). A cation selection region spans residues 333 to 368 (GNSAGHANAVMFAVKDKLDISLGVAIGSSIQISMFG). Over 340 to 353 (NAVMFAVKDKLDIS) the chain is Cytoplasmic. Residues 354–374 (LGVAIGSSIQISMFGIPFCVV) form a helical membrane-spanning segment. At 375-384 (MGWMMGKPMD) the chain is on the extracellular side. Residues 385 to 405 (LNFHLFETASLLTTVLVVAFL) traverse the membrane as a helical segment. At 406-413 (LQDGTSNC) the chain is on the cytoplasmic side. Residues 414–434 (VKGLMLFLCYLIVAASFYVHA) form a helical membrane-spanning segment. The Extracellular portion of the chain corresponds to 435-447 (DPNSKASEKPPQN).

Belongs to the Ca(2+):cation antiporter (CaCA) (TC 2.A.19) family. Cation/proton exchanger (CAX) subfamily.

The protein resides in the vacuole membrane. Its function is as follows. Vacuolar cation/proton exchanger (CAX). Translocates Ca(2+) and other metal ions into vacuoles using the proton gradient formed by H(+)-ATPase and H(+)-pyrophosphatase. The polypeptide is Putative vacuolar cation/proton exchanger 4 (Oryza sativa subsp. japonica (Rice)).